Here is a 197-residue protein sequence, read N- to C-terminus: Large ribosomal subunit protein uL22 (197 aa).

Positions Glu-118–Asp-197 are disordered. Low complexity predominate over residues Ala-149 to Ala-165. Over residues Thr-172–Pro-183 the composition is skewed to basic residues. Positions Ala-184 to Asp-197 are enriched in low complexity.

The protein belongs to the universal ribosomal protein uL22 family. Part of the 50S ribosomal subunit.

This protein binds specifically to 23S rRNA; its binding is stimulated by other ribosomal proteins, e.g. L4, L17, and L20. It is important during the early stages of 50S assembly. It makes multiple contacts with different domains of the 23S rRNA in the assembled 50S subunit and ribosome. In terms of biological role, the globular domain of the protein is located near the polypeptide exit tunnel on the outside of the subunit, while an extended beta-hairpin is found that lines the wall of the exit tunnel in the center of the 70S ribosome. In Mycobacterium bovis (strain ATCC BAA-935 / AF2122/97), this protein is Large ribosomal subunit protein uL22.